The chain runs to 194 residues: Glycerol-3-phosphate acyltransferase 2 (194 aa).

5 helical membrane-spanning segments follow: residues 1-21 (MWLLALVVAYLIGSIPTAYVV), 64-84 (VLAVLLGQALGGPVLVILAAL), 112-132 (LAMAPLALFWAFLIWLAVVIF), 135-155 (YISLGSIVAAAVAPFLVIYFH), and 156-173 (RPWPYVLFTFVAAALVIY).

The protein belongs to the PlsY family. In terms of assembly, probably interacts with PlsX.

The protein localises to the cell membrane. The enzyme catalyses an acyl phosphate + sn-glycerol 3-phosphate = a 1-acyl-sn-glycero-3-phosphate + phosphate. It functions in the pathway lipid metabolism; phospholipid metabolism. In terms of biological role, catalyzes the transfer of an acyl group from acyl-phosphate (acyl-PO(4)) to glycerol-3-phosphate (G3P) to form lysophosphatidic acid (LPA). This enzyme utilizes acyl-phosphate as fatty acyl donor, but not acyl-CoA or acyl-ACP. This Moorella thermoacetica (strain ATCC 39073 / JCM 9320) protein is Glycerol-3-phosphate acyltransferase 2.